A 218-amino-acid chain; its full sequence is Cytochrome b6 (218 aa).

The chain crosses the membrane as a helical span at residues 35-55; it reads IFYCLGGITLVCFLIQFATGF. Cysteine 38 is a binding site for heme c. Positions 89 and 103 each coordinate heme b. The next 3 membrane-spanning stretches (helical) occupy residues 93 to 113, 119 to 139, and 189 to 209; these read ASMMVLMLILHVFRVYLTGGF, LTWITGVVMAVITVAFGVTGY, and LHTFVMPWLLAVFMLMHFLMI. The heme b site is built by histidine 190 and histidine 205.

This sequence belongs to the cytochrome b family. PetB subfamily. In terms of assembly, the 4 large subunits of the cytochrome b6-f complex are cytochrome b6, subunit IV (17 kDa polypeptide, PetD), cytochrome f and the Rieske protein, while the 4 small subunits are PetG, PetL, PetM and PetN. The complex functions as a dimer. Requires heme b as cofactor. Heme c serves as cofactor.

It localises to the cellular thylakoid membrane. Functionally, component of the cytochrome b6-f complex, which mediates electron transfer between photosystem II (PSII) and photosystem I (PSI), cyclic electron flow around PSI, and state transitions. The polypeptide is Cytochrome b6 (Prochlorococcus marinus (strain NATL1A)).